Reading from the N-terminus, the 497-residue chain is Protein adenylyltransferase Fic (497 aa).

Residues 1–30 are disordered; sequence MGATDQALEAESKTTEPPKTPPVPEQHDRP. Residues 38–58 traverse the membrane as a helical segment; it reads LCHLLVLLFSGGLAAITLHIF. TPR repeat units follow at residues 123–156 and 157–191; these read ALGA…APRH and PTVL…SPSN. Positions 248–253 match the Inhibitory (S/T)XXXE(G/N) motif motif; sequence TVGIEG. ATP-binding positions include Glu252 and 333 to 336; that span reads VGGH. Residues 302–437 form the Fido domain; it reads ITIKDILELH…IRPFVRFIAD (136 aa). Residue His380 is part of the active site. Residues 384–391, 416–417, and Asn424 each bind ATP; these read DGNGRTSR and YY. Residues 468-497 form a disordered region; it reads GEGVPQLQSSQMGGGASIPEFHESGSGSLP.

Belongs to the fic family. Homodimer.

It localises to the membrane. It catalyses the reaction L-tyrosyl-[protein] + ATP = O-(5'-adenylyl)-L-tyrosyl-[protein] + diphosphate. It carries out the reaction L-threonyl-[protein] + ATP = 3-O-(5'-adenylyl)-L-threonyl-[protein] + diphosphate. The catalysed reaction is 3-O-(5'-adenylyl)-L-threonyl-[protein] + H2O = L-threonyl-[protein] + AMP + H(+). With respect to regulation, the side chain of Glu-252 determines which of the two opposing activities (AMPylase or de-AMPylase) will take place. In response to endoplasmic reticulum stress, mediates de-AMPylase activity. Adenylyltransferase activity is inhibited by the inhibitory helix present at the N-terminus: Glu-252 binds ATP and competes with ATP-binding at Arg-391, thereby preventing adenylyltransferase activity. In unstressed cells, disengagement of Glu-252 promotes adenylyltransferase activity. Activation dissociates ATP-binding from Glu-252, allowing ordered binding of the entire ATP moiety with the alpha-phosphate in an orientation that is productive for accepting an incoming target hydroxyl side chain. In terms of biological role, protein that can both mediate the addition of adenosine 5'-monophosphate (AMP) to specific residues of target proteins (AMPylation), and the removal of the same modification from target proteins (de-AMPylation), depending on the context. The side chain of Glu-252 determines which of the two opposing activities (AMPylase or de-AMPylase) will take place. Acts as a key regulator of the unfolded protein response (UPR) by mediating AMPylation or de-AMPylation of Hsc70-3/BiP. In unstressed cells, acts as an adenylyltransferase by mediating AMPylation of Hsc70-3/BiP at 'Thr-518', thereby inactivating it. In response to endoplasmic reticulum stress, acts as a phosphodiesterase by mediating removal of ATP (de-AMPylation) from Hsc70-3/BiP at 'Thr-518', leading to restore HSPA5/BiP activity. This Drosophila ananassae (Fruit fly) protein is Protein adenylyltransferase Fic.